A 70-amino-acid chain; its full sequence is Small ribosomal subunit protein bS18c (70 aa).

Belongs to the bacterial ribosomal protein bS18 family. In terms of assembly, part of the 30S ribosomal subunit.

Its subcellular location is the plastid. The protein resides in the chloroplast. In Gracilaria tenuistipitata var. liui (Red alga), this protein is Small ribosomal subunit protein bS18c.